The primary structure comprises 207 residues: Ras-related protein Rab-7a (207 aa).

N-acetylthreonine is present on T2. GTP is bound by residues S17, G18, V19, G20, K21, T22, S23, S34, N35, Y37, and T40. A Mg(2+)-binding site is contributed by T22. A Switch 1 motif is present at residues 28–41; the sequence is YVNKKFSNQYKATI. Mg(2+) contacts are provided by T40 and D63. G66 contributes to the GTP binding site. Positions 67–82 match the Switch 2 motif; the sequence is QERFQSLGVAFYRGAD. The residue at position 72 (S72) is a Phosphoserine. N125, K126, D128, A156, and K157 together coordinate GTP. Glycyl lysine isopeptide (Lys-Gly) (interchain with G-Cter in ubiquitin) cross-links involve residues K191 and K194. Residues C205 and C207 are each lipidated (S-geranylgeranyl cysteine). Position 207 is a cysteine methyl ester (C207).

The protein belongs to the small GTPase superfamily. Rab family. Interacts with NTRK1/TRKA. Interacts with RILP. Interacts with PSMA7. Interacts with RNF115. Interacts with FYCO1. Interacts with the PIK3C3/VPS34-PIK3R4 complex. The GTP-bound form interacts with OSBPL1A. The GTP-bound form interacts with RAC1. Interacts with CLN3. Interacts with CHM, the substrate-binding subunit of the Rab geranylgeranyltransferase complex. Interacts with C9orf72. Does not interact with HPS4 and the BLOC-3 complex (heterodimer of HPS1 and HPS4). Interacts with CLN5. Interacts with PLEKHM1 (via N- and C-terminus). Interacts with PRPH; the interaction is direct. Interacts with VPS13A. The GDP-bound form interacts with RIMOC1. Interacts with the MON1A-CCZ1B complex and this interaction is enhanced in the presence of RIMOC1. Interacts with VPS39 and VPS41. Forms a ternary complex with LAMP2 and RUFY4; the interaction with LAMP2 is mediated by RUFY4 (via RUN and coiled coil domains). Mg(2+) serves as cofactor. Post-translationally, deubiquitination at Lys-191 and Lys-194 by USP32. In terms of processing, phosphorylated at Ser-72 by LRRK1; phosphorylation is dependent on protein kinase C (PKC) activation of LRRK1. Prenylated. Prenylation is required for association with cellular membranes.

Its subcellular location is the cytoplasmic vesicle. It is found in the phagosome membrane. The protein localises to the late endosome membrane. It localises to the lysosome membrane. The protein resides in the melanosome membrane. Its subcellular location is the autophagosome membrane. It is found in the lipid droplet. The protein localises to the endosome membrane. It localises to the mitochondrion membrane. It catalyses the reaction GTP + H2O = GDP + phosphate + H(+). Regulated by guanine nucleotide exchange factors (GEFs) which promote the exchange of bound GDP for free GTP. Regulated by GTPase activating proteins (GAPs) which increase the GTP hydrolysis activity. Inhibited by GDP dissociation inhibitors (GDIs). Its function is as follows. The small GTPases Rab are key regulators of intracellular membrane trafficking, from the formation of transport vesicles to their fusion with membranes. Rabs cycle between an inactive GDP-bound form and an active GTP-bound form that is able to recruit to membranes different sets of downstream effectors directly responsible for vesicle formation, movement, tethering and fusion. In its active state, RAB7A binds to a variety of effector proteins playing a key role in the regulation of endo-lysosomal trafficking. Governs early-to-late endosomal maturation, microtubule minus-end as well as plus-end directed endosomal migration and positioning, and endosome-lysosome transport through different protein-protein interaction cascades. Also plays a central role in growth-factor-mediated cell signaling, nutrient-transporter-mediated nutrient uptake, neurotrophin transport in the axons of neurons and lipid metabolism. Also involved in regulation of some specialized endosomal membrane trafficking, such as maturation of melanosomes, pathogen-induced phagosomes (or vacuoles) and autophagosomes. Plays a role in the maturation and acidification of phagosomes that engulf pathogens, such as S.aureus and Mycobacteria. Plays a role in the fusion of phagosomes with lysosomes. In concert with RAC1, plays a role in regulating the formation of RBs (ruffled borders) in osteoclasts. Controls the endosomal trafficking and neurite outgrowth signaling of NTRK1/TRKA. Regulates the endocytic trafficking of the EGF-EGFR complex by regulating its lysosomal degradation. Involved in the ADRB2-stimulated lipolysis through lipophagy, a cytosolic lipase-independent autophagic pathway. Required for the exosomal release of SDCBP, CD63 and syndecan. Required for vesicular trafficking and cell surface expression of ACE2. May play a role in PRPH neuronal intermediate filament assembly. This chain is Ras-related protein Rab-7a (RAB7A), found in Canis lupus familiaris (Dog).